A 283-amino-acid polypeptide reads, in one-letter code: 4-hydroxy-3-methylbut-2-enyl diphosphate reductase (283 aa).

[4Fe-4S] cluster is bound at residue Cys-12. Positions 41 and 74 each coordinate (2E)-4-hydroxy-3-methylbut-2-enyl diphosphate. His-41 and His-74 together coordinate dimethylallyl diphosphate. Isopentenyl diphosphate contacts are provided by His-41 and His-74. Cys-96 serves as a coordination point for [4Fe-4S] cluster. (2E)-4-hydroxy-3-methylbut-2-enyl diphosphate is bound at residue His-124. His-124 is a binding site for dimethylallyl diphosphate. Isopentenyl diphosphate is bound at residue His-124. Catalysis depends on Glu-126, which acts as the Proton donor. Thr-161 contributes to the (2E)-4-hydroxy-3-methylbut-2-enyl diphosphate binding site. Cys-189 contributes to the [4Fe-4S] cluster binding site. (2E)-4-hydroxy-3-methylbut-2-enyl diphosphate is bound by residues Ser-217, Asn-219, and Ser-261. Dimethylallyl diphosphate is bound by residues Ser-217, Asn-219, and Ser-261. The isopentenyl diphosphate site is built by Ser-217, Asn-219, and Ser-261.

Belongs to the IspH family. The cofactor is [4Fe-4S] cluster.

The enzyme catalyses isopentenyl diphosphate + 2 oxidized [2Fe-2S]-[ferredoxin] + H2O = (2E)-4-hydroxy-3-methylbut-2-enyl diphosphate + 2 reduced [2Fe-2S]-[ferredoxin] + 2 H(+). It catalyses the reaction dimethylallyl diphosphate + 2 oxidized [2Fe-2S]-[ferredoxin] + H2O = (2E)-4-hydroxy-3-methylbut-2-enyl diphosphate + 2 reduced [2Fe-2S]-[ferredoxin] + 2 H(+). The protein operates within isoprenoid biosynthesis; dimethylallyl diphosphate biosynthesis; dimethylallyl diphosphate from (2E)-4-hydroxy-3-methylbutenyl diphosphate: step 1/1. Its pathway is isoprenoid biosynthesis; isopentenyl diphosphate biosynthesis via DXP pathway; isopentenyl diphosphate from 1-deoxy-D-xylulose 5-phosphate: step 6/6. Functionally, catalyzes the conversion of 1-hydroxy-2-methyl-2-(E)-butenyl 4-diphosphate (HMBPP) into a mixture of isopentenyl diphosphate (IPP) and dimethylallyl diphosphate (DMAPP). Acts in the terminal step of the DOXP/MEP pathway for isoprenoid precursor biosynthesis. This is 4-hydroxy-3-methylbut-2-enyl diphosphate reductase from Anaeromyxobacter sp. (strain Fw109-5).